The sequence spans 301 residues: MPIIIDKDLPARKVLQKENIFVMTKERAETQDIRALKIAILNLMPTKQDTEAQLLRLIGNTPLQLDVHLLHMESHLSRNVTQEHLTSFYKTFRDIENEKFDGLIITGAPVETLAFEEVDYWEELKHIMEYSKTNVTSTLHICWGAQAGLYYHYGVPKYPLKEKVFGVFEHEVCEQHVKLLQGFDELFFAPHSRHTEVRENDIRGVKELTLLANSEEAGVHLVIGPEGRQVFALGHSEYSCETLKQEYERDRDKGLNIDVPKNYFKHNNPDEKPLVRWRSHGNLLFSNWLNYYVYQETPYIL.

C142 functions as the Acyl-thioester intermediate in the catalytic mechanism. Residues K163 and S192 each contribute to the substrate site. H235 functions as the Proton acceptor in the catalytic mechanism. E237 is a catalytic residue. R249 is a binding site for substrate.

Belongs to the MetA family.

The protein resides in the cytoplasm. The enzyme catalyses L-homoserine + acetyl-CoA = O-acetyl-L-homoserine + CoA. The protein operates within amino-acid biosynthesis; L-methionine biosynthesis via de novo pathway; O-acetyl-L-homoserine from L-homoserine: step 1/1. Functionally, transfers an acetyl group from acetyl-CoA to L-homoserine, forming acetyl-L-homoserine. This Bacillus cereus (strain B4264) protein is Homoserine O-acetyltransferase.